The following is a 407-amino-acid chain: Gonadotropin-releasing hormone receptor (407 aa).

Residues 1–36 (MDYLNDSMFNNMTYNITSTPLPDAPRFDNVYVSKLC) lie on the Extracellular side of the membrane. N-linked (GlcNAc...) asparagine glycosylation is found at Asn5, Asn11, and Asn15. Residues 37 to 57 (VLGTVFVISFFGNTLVIIQIF) form a helical membrane-spanning segment. Residues 58-69 (RIRGSRSTIQSL) lie on the Cytoplasmic side of the membrane. The helical transmembrane segment at 70–90 (ILNLAIADLMVSFFNILMDII) threads the bilayer. Residues 91-105 (WSATVEWLAGNTMCK) are Extracellular-facing. Cys104 and Cys183 form a disulfide bridge. The helical transmembrane segment at 106 to 126 (IMKYLTVFGLHLSTYITVSIA) threads the bilayer. Topologically, residues 127–147 (LDRCFAILSPMSRSKAPLRVR) are cytoplasmic. The helical transmembrane segment at 148 to 168 (IMITMAWVLSAIFSIPQAVIF) threads the bilayer. The Extracellular portion of the chain corresponds to 169–199 (QEQRKMFRQGMFHQCRDSYNALWQKQLYSAS). The helical transmembrane segment at 200-220 (SLILLFVIPLIIMVTSYLLIL) threads the bilayer. Residues 221 to 268 (KTIVKTSRQFHDTPISPTSMSCYSVNHGQIRTHLFERARKRSSRMSAV) lie on the Cytoplasmic side of the membrane. The helical transmembrane segment at 269–289 (IVAAFILCWTPYYIIFLGFAF) threads the bilayer. The Extracellular segment spans residues 290–298 (FQWDNSRTV). Residues 299–319 (IYFFTLGTSNCMLNPLIYGAF) form a helical membrane-spanning segment. The Cytoplasmic portion of the chain corresponds to 320–407 (TIYKVHRGRS…NGKMPTKPPG (88 aa)). The disordered stretch occupies residues 377–407 (SLTNPHQPVRPSPGINSTTSPNGKMPTKPPG).

The protein belongs to the G-protein coupled receptor 1 family. Widely expressed in peripheral nervous tissue, gonadal tissue and brain. In the brain, expression is high in the palliovisceral lobe and superior buccal lobe but low in the subvertical lobe, superior and inferior frontal lobe, posterior brachial lobe and pedal lobe. Expressed in stomach, rectum, aorta, heart, salivary gland, branchia, pancreas, radula retractor muscle, branchial vessel but not in white body, esophagus, liver and kidney.

The protein resides in the cell membrane. In terms of biological role, receptor for gonadotropin releasing hormone (GnRH) that mediates the action of GnRH to stimulate the secretion of the gonadotropic hormones luteinizing hormone (LH) and follicle-stimulating hormone (FSH). This receptor mediates its action by association with G-proteins that activate a phosphatidylinositol-calcium second messenger system. Ligand interaction triggers steroidogenesis in spermatozoa and follicles. Appears to be involved in contraction of the radula retractor muscle. This chain is Gonadotropin-releasing hormone receptor, found in Octopus vulgaris (Common octopus).